The chain runs to 244 residues: NVRFDLSSATSSSYKTFIKNLREALPKDGKVYDIPVLLSTVMDSRRFILIDLVNYDGQSITAAIDVLNVYIVAYSTGTVSYFFQQVPAQAPKLLFKGTQQRTLPYTGNYENLQTAAKKLRENIELGLPALDSAITTLFHYNAEAAASALLVLIQTTSEAARFRYIELQIANNVGTKFKPSQTIISLENNWSALSKQIQIAKNKNGQFETPVILIDPQGNRVQITNVTSNVVTQNIQLLLNIGAT.

Active-site residues include Tyr-70, Tyr-109, Glu-158, and Arg-161. N-linked (GlcNAc...) asparagine glycans are attached at residues Asn-189 and Asn-225.

This sequence belongs to the ribosome-inactivating protein family. Type 1 RIP subfamily. Post-translationally, the N-linked glycan consists of GlcNAc2Man3Xyl.

The enzyme catalyses Endohydrolysis of the N-glycosidic bond at one specific adenosine on the 28S rRNA.. In terms of biological role, has cytotoxic activity towards cancer cells, but not normal cells. Inhibits the growth of the human leukemia cell line K562, the murine melanoma cell line B16 and the lung adenocarcinoma cell line A549 with IC(50) values of 88.1 nM, 63.4 nM and 359.3 nM respectively. The sequence is that of Ribosome-inactivating protein cucurmosin from Cucurbita moschata (Winter crookneck squash).